Consider the following 106-residue polypeptide: Gibberellin-regulated protein 4 (106 aa).

An N-terminal signal peptide occupies residues 1 to 25 (MAKSYGAIFLLTLIVLFMLQTMVMA).

This sequence belongs to the GASA family. In terms of processing, six disulfide bonds may be present. In terms of tissue distribution, expressed in flower buds, style, stamen filaments, vasculature of petals, root phloem, vasculature of cotyledons and rosette leaves and developing embryo.

It localises to the secreted. In terms of biological role, gibberellin-regulated protein involved in the regulation of floral meristem and floral organ identity, and promotion of seed size and weight. May play a role in the promotion of gibberellin responses such as regulation of flowering under short-day conditions, seed germination and inhibition of gibberellin oxidase. Possesses redox activity in E.coli and may function in redox regulation in planta. The sequence is that of Gibberellin-regulated protein 4 (GASA4) from Arabidopsis thaliana (Mouse-ear cress).